A 390-amino-acid polypeptide reads, in one-letter code: S-adenosylmethionine synthase 1 (390 aa).

E9 serves as a coordination point for Mg(2+). ATP is bound at residue H15. E43 contacts K(+). E56 and Q99 together coordinate L-methionine. ATP contacts are provided by residues D167–K169, S235–F238, D246, R252–K253, A269, K273, and K277. D246 contributes to the L-methionine binding site. K277 serves as a coordination point for L-methionine.

Belongs to the AdoMet synthase family. As to quaternary structure, homotetramer. Requires Mn(2+) as cofactor. The cofactor is Mg(2+). Co(2+) is required as a cofactor. K(+) serves as cofactor.

The protein resides in the cytoplasm. The enzyme catalyses L-methionine + ATP + H2O = S-adenosyl-L-methionine + phosphate + diphosphate. The protein operates within amino-acid biosynthesis; S-adenosyl-L-methionine biosynthesis; S-adenosyl-L-methionine from L-methionine: step 1/1. In terms of biological role, catalyzes the formation of S-adenosylmethionine from methionine and ATP. The reaction comprises two steps that are both catalyzed by the same enzyme: formation of S-adenosylmethionine (AdoMet) and triphosphate, and subsequent hydrolysis of the triphosphate. This Petunia hybrida (Petunia) protein is S-adenosylmethionine synthase 1 (SAM1).